The chain runs to 82 residues: Ice-structuring protein A (82 aa).

The signal sequence occupies residues 1 to 23 (MALSLFTVGQLIFLFWTMRITEA). The propeptide at 24–44 (SPDPAAKAAPAAAAAPAAAAP) is removed by a dipeptidylpeptidase. Position 81 is an arginine amide (Arg-81).

It belongs to the type-I AFP family. In terms of tissue distribution, detected in liver and in blood serum (at protein level).

The protein resides in the secreted. In terms of biological role, contributes to protect fish blood from freezing at subzero sea water temperatures. Lowers the blood freezing point. Binds to nascent ice crystals and prevents further growth. This is Ice-structuring protein A from Pseudopleuronectes americanus (Winter flounder).